We begin with the raw amino-acid sequence, 193 residues long: uncharacterized protein (193 aa).

2 disordered regions span residues 1 to 67 and 110 to 160; these read MSGP…GPRS and QRTP…LPGS. Composition is skewed to low complexity over residues 50–64 and 148–160; these read GPQR…ARPG and AGAS…LPGS.

This is an uncharacterized protein from Homo sapiens (Human).